The following is a 536-amino-acid chain: Solute carrier family 2, facilitated glucose transporter member 10 (536 aa).

Over 1–15 (MGLRPAVLLLCASVS) the chain is Cytoplasmic. A helical membrane pass occupies residues 16 to 36 (LLGGLTFGYELAVISGALLPL). The Extracellular segment spans residues 37 to 48 (QLNFGLSCLEQE). The chain crosses the membrane as a helical span at residues 49-69 (LLVGSLLLGALLASLVGGFLI). Topologically, residues 70-82 (DCYGRRRAILGSN) are cytoplasmic. The helical transmembrane segment at 83–103 (AVLLAGSLILGLASSLPWLLL) threads the bilayer. Topologically, residues 104–107 (GRLS) are extracellular. The helical transmembrane segment at 108–128 (VGFAISLSSMACCIYVSELVG) threads the bilayer. The Cytoplasmic portion of the chain corresponds to 129 to 132 (PRQR). The chain crosses the membrane as a helical span at residues 133–153 (GVLVSLYEVGITVGILFSYGL). Over 154–166 (NYVLAGSPWGWRH) the chain is Extracellular. Residues 167-187 (MFGWAAAPALLQSLSLFLLPA) form a helical membrane-spanning segment. Residues 188-232 (GAEGTAAPKDLIPLQGRETSKPGLVKPQYSFLDLFRAQDGMWSRT) are Cytoplasmic-facing. Residues 233-253 (VVGLGLVLFQQLTGQPNVLYY) traverse the membrane as a helical segment. D-glucose is bound at residue 242-243 (QQ). Residues 254 to 269 (ASTIFRSVGFHGGSSA) lie on the Extracellular side of the membrane. Residues 270–290 (VLASVGLGTVKVAATLVATGL) traverse the membrane as a helical segment. The Cytoplasmic segment spans residues 291–298 (VDRAGRRV). A helical membrane pass occupies residues 299 to 319 (LLLFGCALMALSVSGIGLVSF). The Extracellular portion of the chain corresponds to 320–402 (AVSLDSGPSC…VPTSPILEHT (83 aa)). Residues 403–423 (LLCWSALVCMMVYVSAFSVGF) traverse the membrane as a helical segment. Residues 424–442 (GPVTWLVLSEIYPAEIRGR) are Cytoplasmic-facing. W428 provides a ligand contact to D-glucose. Residues 443–463 (AFAFCSSFNWAANLFISLSFL) form a helical membrane-spanning segment. At 464–468 (DLIGA) the chain is on the extracellular side. Residues 469-489 (IGLAWTFLLYGLTAVLGLAFI) traverse the membrane as a helical segment. The Cytoplasmic portion of the chain corresponds to 490 to 536 (YLLVPETKGQSLAEIEQQFQTSRFPLNFGHRQRIGIQYHRLDVSSAS).

This sequence belongs to the major facilitator superfamily. Sugar transporter (TC 2.A.1.1) family. Glucose transporter subfamily.

It localises to the endomembrane system. Its subcellular location is the cytoplasm. The protein localises to the perinuclear region. It catalyses the reaction D-glucose(out) = D-glucose(in). Facilitative glucose transporter required for the development of the cardiovascular system. The sequence is that of Solute carrier family 2, facilitated glucose transporter member 10 from Mus musculus (Mouse).